A 114-amino-acid chain; its full sequence is Chaperone protein YscY (114 aa).

In terms of assembly, binds to YscX.

It is found in the cytoplasm. In terms of biological role, required for Yop secretion. Functions probably as a chaperone which stabilizes YscX within the cell, before its secretion. The protein is Chaperone protein YscY (yscY) of Yersinia enterocolitica serotype O:8 / biotype 1B (strain NCTC 13174 / 8081).